A 72-amino-acid polypeptide reads, in one-letter code: Translation initiation factor IF-1 (72 aa).

The S1-like domain occupies 1–72 (MSKEEAIEVE…TRGRITYRAK (72 aa)).

The protein belongs to the IF-1 family. Component of the 30S ribosomal translation pre-initiation complex which assembles on the 30S ribosome in the order IF-2 and IF-3, IF-1 and N-formylmethionyl-tRNA(fMet); mRNA recruitment can occur at any time during PIC assembly.

Its subcellular location is the cytoplasm. Functionally, one of the essential components for the initiation of protein synthesis. Stabilizes the binding of IF-2 and IF-3 on the 30S subunit to which N-formylmethionyl-tRNA(fMet) subsequently binds. Helps modulate mRNA selection, yielding the 30S pre-initiation complex (PIC). Upon addition of the 50S ribosomal subunit IF-1, IF-2 and IF-3 are released leaving the mature 70S translation initiation complex. This Geotalea uraniireducens (strain Rf4) (Geobacter uraniireducens) protein is Translation initiation factor IF-1.